A 61-amino-acid chain; its full sequence is Large ribosomal subunit protein bL28 (61 aa).

It belongs to the bacterial ribosomal protein bL28 family.

This chain is Large ribosomal subunit protein bL28, found in Nocardioides sp. (strain ATCC BAA-499 / JS614).